The following is a 697-amino-acid chain: ATP-dependent zinc metalloprotease FtsH (697 aa).

Residues 1-23 (MSQNERDSLELERKNTPPDGPRL) form a disordered region. Over 1 to 29 (MSQNERDSLELERKNTPPDGPRLPERRPR) the chain is Cytoplasmic. A helical membrane pass occupies residues 30-50 (FSVWIYLAIFLALLVHFFLFW). The Periplasmic portion of the chain corresponds to 51–158 (TGTDTSTIEY…QFTARIEENW (108 aa)). The chain crosses the membrane as a helical span at residues 159 to 179 (FGGLLTWIFPLILIVALWVFL). Over 180–697 (LRRMSPSSQV…TERPESSSAP (518 aa)) the chain is Cytoplasmic. ATP is bound at residue 251 to 258 (GPPGTGKT). Zn(2+) is bound at residue histidine 474. Glutamate 475 is an active-site residue. Histidine 478 and aspartate 550 together coordinate Zn(2+). Positions 649–697 (GPRPYGDYPSPNGKDVEELKDLQKGEPTSSSAVEAPAPQTERPESSSAP) are disordered. The segment covering 662–672 (KDVEELKDLQK) has biased composition (basic and acidic residues).

This sequence in the central section; belongs to the AAA ATPase family. The protein in the C-terminal section; belongs to the peptidase M41 family. As to quaternary structure, homohexamer. It depends on Zn(2+) as a cofactor.

It is found in the cell inner membrane. In terms of biological role, acts as a processive, ATP-dependent zinc metallopeptidase for both cytoplasmic and membrane proteins. Plays a role in the quality control of integral membrane proteins. In Rhodothermus marinus (strain ATCC 43812 / DSM 4252 / R-10) (Rhodothermus obamensis), this protein is ATP-dependent zinc metalloprotease FtsH.